Here is a 145-residue protein sequence, read N- to C-terminus: Fatty acid-binding protein homolog 4 (145 aa).

It belongs to the calycin superfamily. Fatty-acid binding protein (FABP) family.

The chain is Fatty acid-binding protein homolog 4 (lbp-4) from Caenorhabditis elegans.